Consider the following 309-residue polypeptide: Carbamate kinase (309 aa).

The protein belongs to the carbamate kinase family.

It is found in the cytoplasm. The enzyme catalyses hydrogencarbonate + NH4(+) + ATP = carbamoyl phosphate + ADP + H2O + H(+). It participates in metabolic intermediate metabolism; carbamoyl phosphate degradation; CO(2) and NH(3) from carbamoyl phosphate: step 1/1. The polypeptide is Carbamate kinase (arcC) (Staphylococcus haemolyticus (strain JCSC1435)).